A 570-amino-acid polypeptide reads, in one-letter code: Urease subunit alpha (570 aa).

A Urease domain is found at 131–570 (GGFDSHIHFI…LPLAQRYFMF (440 aa)). 3 residues coordinate Ni(2+): His-136, His-138, and Lys-219. Lys-219 bears the N6-carboxylysine mark. His-221 serves as a coordination point for substrate. Residues His-248 and His-274 each coordinate Ni(2+). The active-site Proton donor is the His-322. Residue Asp-362 coordinates Ni(2+).

The protein belongs to the metallo-dependent hydrolases superfamily. Urease alpha subunit family. In terms of assembly, heterotrimer of UreA (gamma), UreB (beta) and UreC (alpha) subunits. Three heterotrimers associate to form the active enzyme. Requires Ni cation as cofactor. Carboxylation allows a single lysine to coordinate two nickel ions.

It localises to the cytoplasm. It carries out the reaction urea + 2 H2O + H(+) = hydrogencarbonate + 2 NH4(+). The protein operates within nitrogen metabolism; urea degradation; CO(2) and NH(3) from urea (urease route): step 1/1. In Rhodopseudomonas palustris (strain TIE-1), this protein is Urease subunit alpha.